We begin with the raw amino-acid sequence, 534 residues long: Bifunctional pantoate ligase/cytidylate kinase (534 aa).

The segment at 1 to 302 (MRLLTTVAAL…LGSTRLIDNT (302 aa)) is pantoate--beta-alanine ligase. Position 48-55 (48-55 (MGSLHQGH)) interacts with ATP. Residue His55 is the Proton donor of the active site. Gln79 contributes to the (R)-pantoate binding site. Gln79 is a beta-alanine binding site. 172-175 (GQKD) is a binding site for ATP. Gln178 is a binding site for (R)-pantoate. Residues Val201 and 209–212 (CSSR) contribute to the ATP site. A cytidylate kinase region spans residues 303–534 (ILRDRQPIIA…DYYQQRLSQW (232 aa)).

It in the N-terminal section; belongs to the pantothenate synthetase family. In the C-terminal section; belongs to the cytidylate kinase family. Type 1 subfamily.

The protein resides in the cytoplasm. It catalyses the reaction (R)-pantoate + beta-alanine + ATP = (R)-pantothenate + AMP + diphosphate + H(+). It carries out the reaction CMP + ATP = CDP + ADP. The catalysed reaction is dCMP + ATP = dCDP + ADP. It functions in the pathway cofactor biosynthesis; (R)-pantothenate biosynthesis; (R)-pantothenate from (R)-pantoate and beta-alanine: step 1/1. In terms of biological role, catalyzes the condensation of pantoate with beta-alanine in an ATP-dependent reaction via a pantoyl-adenylate intermediate. Its function is as follows. Catalyzes the transfer of a phosphate group from ATP to either CMP or dCMP to form CDP or dCDP and ADP, respectively. This Nostoc sp. (strain PCC 7120 / SAG 25.82 / UTEX 2576) protein is Bifunctional pantoate ligase/cytidylate kinase.